The sequence spans 139 residues: ATP synthase epsilon chain (139 aa).

This sequence belongs to the ATPase epsilon chain family. As to quaternary structure, F-type ATPases have 2 components, CF(1) - the catalytic core - and CF(0) - the membrane proton channel. CF(1) has five subunits: alpha(3), beta(3), gamma(1), delta(1), epsilon(1). CF(0) has three main subunits: a, b and c.

It is found in the cell inner membrane. Functionally, produces ATP from ADP in the presence of a proton gradient across the membrane. The protein is ATP synthase epsilon chain of Alcanivorax borkumensis (strain ATCC 700651 / DSM 11573 / NCIMB 13689 / SK2).